The following is a 363-amino-acid chain: NAD(P)H-quinone oxidoreductase subunit 1, chloroplastic (363 aa).

8 helical membrane passes run 30 to 50, 98 to 118, 127 to 147, 165 to 185, 203 to 223, 248 to 268, 300 to 320, and 336 to 356; these read LVPI…IVWL, FSIG…VIPF, LSIG…GLLM, AAQS…ISLL, FWGW…ISSL, YSGI…LVSS, VFGT…FLFI, and LLNL…LLTT.

It belongs to the complex I subunit 1 family. NDH is composed of at least 16 different subunits, 5 of which are encoded in the nucleus.

It localises to the plastid. The protein localises to the chloroplast thylakoid membrane. The enzyme catalyses a plastoquinone + NADH + (n+1) H(+)(in) = a plastoquinol + NAD(+) + n H(+)(out). It carries out the reaction a plastoquinone + NADPH + (n+1) H(+)(in) = a plastoquinol + NADP(+) + n H(+)(out). In terms of biological role, NDH shuttles electrons from NAD(P)H:plastoquinone, via FMN and iron-sulfur (Fe-S) centers, to quinones in the photosynthetic chain and possibly in a chloroplast respiratory chain. The immediate electron acceptor for the enzyme in this species is believed to be plastoquinone. Couples the redox reaction to proton translocation, and thus conserves the redox energy in a proton gradient. This chain is NAD(P)H-quinone oxidoreductase subunit 1, chloroplastic, found in Solanum bulbocastanum (Wild potato).